A 476-amino-acid chain; its full sequence is 3-isopropylmalate dehydratase large subunit (476 aa).

[4Fe-4S] cluster contacts are provided by C357, C417, and C420.

It belongs to the aconitase/IPM isomerase family. LeuC type 1 subfamily. As to quaternary structure, heterodimer of LeuC and LeuD. It depends on [4Fe-4S] cluster as a cofactor.

It carries out the reaction (2R,3S)-3-isopropylmalate = (2S)-2-isopropylmalate. The protein operates within amino-acid biosynthesis; L-leucine biosynthesis; L-leucine from 3-methyl-2-oxobutanoate: step 2/4. In terms of biological role, catalyzes the isomerization between 2-isopropylmalate and 3-isopropylmalate, via the formation of 2-isopropylmaleate. The polypeptide is 3-isopropylmalate dehydratase large subunit (Mycobacterium leprae (strain TN)).